The primary structure comprises 81 residues: Acyl carrier protein (81 aa).

The Carrier domain occupies 1–79; it reads MDVAAMQVKI…DIFDYLAKNK (79 aa). At Ser39 the chain carries O-(pantetheine 4'-phosphoryl)serine.

Belongs to the acyl carrier protein (ACP) family. In terms of processing, 4'-phosphopantetheine is transferred from CoA to a specific serine of apo-ACP by AcpS. This modification is essential for activity because fatty acids are bound in thioester linkage to the sulfhydryl of the prosthetic group.

It is found in the cytoplasm. It functions in the pathway lipid metabolism; fatty acid biosynthesis. Its function is as follows. Carrier of the growing fatty acid chain in fatty acid biosynthesis. The chain is Acyl carrier protein from Syntrophobacter fumaroxidans (strain DSM 10017 / MPOB).